The chain runs to 124 residues: Fluoride-specific ion channel FluC (124 aa).

4 helical membrane passes run 1-21 (MIGV…LRFA), 34-54 (FYAA…YLYG), 62-82 (VPLA…TTFS), and 101-121 (FSYL…GLIL). Residues Gly76 and Thr79 each coordinate Na(+).

This sequence belongs to the fluoride channel Fluc/FEX (TC 1.A.43) family.

The protein resides in the cell inner membrane. The enzyme catalyses fluoride(in) = fluoride(out). Its activity is regulated as follows. Na(+) is not transported, but it plays an essential structural role and its presence is essential for fluoride channel function. Fluoride-specific ion channel. Important for reducing fluoride concentration in the cell, thus reducing its toxicity. The polypeptide is Fluoride-specific ion channel FluC (Azotobacter vinelandii (strain DJ / ATCC BAA-1303)).